Reading from the N-terminus, the 394-residue chain is THAP domain-containing protein 5 (394 aa).

The segment at 1–84 (MPRYCAAICC…LKQTAIPTIF (84 aa)) adopts a THAP-type zinc-finger fold. The interval 86–109 (LPEDNQEKDPSKKKSQKKKLKSEK) is disordered. Positions 320–323 (EHSY) match the HCFC1-binding motif (HBM) motif. A coiled-coil region spans residues 347–381 (LELQEQQTLGRLKSLEALIRQLKQENWLSEENVKI).

Interacts with HTRA2; under apoptotic conditions. Interacts with ABRAXAS2. Cleaved by HTRA2 during apoptosis.

It localises to the nucleus. Functionally, has sequence-specific DNA-binding activity and can function as transcriptional repressor (in vitro). May be a regulator of cell cycle: THAP5 overexpression in human cell lines causes cell cycle arrest at G2/M phase. In Bos taurus (Bovine), this protein is THAP domain-containing protein 5 (THAP5).